The sequence spans 259 residues: Hydroxyacylglutathione hydrolase (259 aa).

Zn(2+) is bound by residues H56, H58, D60, H61, H112, D133, and H171. The interval 220–243 (NPFLRTGETSVKEKADERSDAQNT) is disordered. Basic and acidic residues predominate over residues 229–239 (SVKEKADERSD).

This sequence belongs to the metallo-beta-lactamase superfamily. Glyoxalase II family. As to quaternary structure, monomer. Zn(2+) is required as a cofactor.

It catalyses the reaction an S-(2-hydroxyacyl)glutathione + H2O = a 2-hydroxy carboxylate + glutathione + H(+). It functions in the pathway secondary metabolite metabolism; methylglyoxal degradation; (R)-lactate from methylglyoxal: step 2/2. In terms of biological role, thiolesterase that catalyzes the hydrolysis of S-D-lactoyl-glutathione to form glutathione and D-lactic acid. The sequence is that of Hydroxyacylglutathione hydrolase from Pseudomonas syringae pv. syringae (strain B728a).